Consider the following 153-residue polypeptide: Ribosome maturation factor RimP (153 aa).

The protein belongs to the RimP family.

The protein resides in the cytoplasm. In terms of biological role, required for maturation of 30S ribosomal subunits. The chain is Ribosome maturation factor RimP from Psychromonas ingrahamii (strain DSM 17664 / CCUG 51855 / 37).